Reading from the N-terminus, the 1321-residue chain is MKFGKTFPNHQVPEWAHKYVNYKGLKKQIKEITLVQDALFRQEQGAASQDGPARRRGRESKEQYLGHPEVKKLLAAFFFALDRDIEKVDGFYNMQFMEYDRRLRKLLSSAQLADITSVQRGATGYLHAPLPQYIAYGERERDGLPERYVPPHATDMSEDLAEVLTILLELRSHFRNLKWYGELNKRAFTKIMKKLDKKVGTNQQHSYFQARIKPLEFADDTPIVKALATINEILDRISPCVKDLQDKLRGEDRRLLQGSSSPIDVASQLVTKDDGAGLINELISMYRSVVLIPTRTLVTLLNKSALSRSFSCVDEILGIIPTLGDPSDINGRNFFHHHVIALGKKRTKSLEERDNINSLLSDSLDLEAAIPPEPNTRLVGAFGPDGVNSDDSPAPLSHILQQLPAHLRPSLLQRDNYKRTPLHYSAQYGLCEVTRIILQALSEWDAWNADVAIDDIDVWGDSENLTPLHLAVIGTHPLTVSTLLSFMNPEKSLNSPRLLHLATRLNSPSLLNSLLSAKGFDIDYQEPENLETALYVACKLDIYEAAEYLVKQGANMELGEKLFGWTPIFAAATEGYARIVQLLVDHGAKYDLFDESGWTPMEHAALRGHLDISQLIRITDNKAITRPKFATDWNKSTRPTETTNGLLSALTPSESGSTTTGSENKSSSLTPSTSNEMYALPARSSTSIDKISEPNKGNHRKVLKSQLSHGKVQTIKDTQLPQQPIKSFGHSFLQKDESVILLTLGTNDNRSTIPAVSLNKVPVAKASSTELDTALSLLVTCMDNLDAEPVMLDLPLHENLDSVTFKVPYKKDSSYTIFFDIVPTYGYSMANMNRENSSGMHSNVGNSTGPAYLDAQVGQCGSRLHYDQLGRDTPNTYDQRSRHQASQQKEQIATKKQSKILGRAVALLDSAPTSVGPNRRSIAEAITIPIIGSDTLEVLGIIRFDFLVVTPFVHKNLSVGPAETYWKSLVSTRVIGHRGLGKNMNTNKSLQLGENTVESFIAAASLGASYVEFDVQLTKDNIPVVYHDFLVAESGVDIPMHELTLEQFLDLNGERQRHQDAREAHRNHRSPNGRRLSMDDSSAELIKRSLMMRGDEDRTARDLNTIYGDRMRLTRTFKKNAFKANSRGHAIASSFVTLKELFKKIPQNVGFNIECKYPMVDEAEEEDIGPIAVEMNHWIDTVLEVVYDNVEGRDVIFSSFQPDVCLMLSLKQPSFPILFLTEGGTAKRCDIRAASLQNAIRFAHRWNLLGIVSAAAPIVIAPRLAQIVKSSGLVCVTYGVENNDPEIARVEMDAGVDAVIVDSVLAVRKGLTREAQDADTL.

One can recognise an SPX domain in the interval Met1–Gln209. 6 ANK repeats span residues Tyr417–Ala446, Glu463–Ser495, Arg497–Tyr524, Asn529–Leu558, Phe563–Leu592, and Ser596–Arg626. Disordered regions lie at residues Ala630–Asn698, Gln868–Ala893, and Gln1056–Asp1079. Over residues Trp633–Leu646 the composition is skewed to polar residues. Positions Thr651–Ser668 are enriched in low complexity. Residues Thr873–Ala893 show a composition bias toward polar residues. A GP-PDE domain is found at Thr972 to Leu1311.

This sequence belongs to the GDE1 family.

The protein resides in the cytoplasm. The catalysed reaction is sn-glycerol 3-phosphocholine + H2O = sn-glycerol 3-phosphate + choline + H(+). Functionally, glycerophosphocholine glycerophosphodiesterase responsible for the hydrolysis of intracellular glycerophosphocholine into glycerol-phosphate and choline. The choline is used for phosphatidyl-choline synthesis. Required for utilization of glycerophosphocholine as phosphate source. This Eremothecium gossypii (strain ATCC 10895 / CBS 109.51 / FGSC 9923 / NRRL Y-1056) (Yeast) protein is Glycerophosphocholine phosphodiesterase GDE1 (GDE1).